A 108-amino-acid chain; its full sequence is Universal stress protein Slr1101 (108 aa).

This sequence belongs to the universal stress protein A family.

This Synechocystis sp. (strain ATCC 27184 / PCC 6803 / Kazusa) protein is Universal stress protein Slr1101.